Here is a 124-residue protein sequence, read N- to C-terminus: Small ribosomal subunit protein bS6 (124 aa).

It belongs to the bacterial ribosomal protein bS6 family.

Functionally, binds together with bS18 to 16S ribosomal RNA. The protein is Small ribosomal subunit protein bS6 of Haemophilus ducreyi (strain 35000HP / ATCC 700724).